The sequence spans 157 residues: Crossover junction endodeoxyribonuclease RuvC (157 aa).

Catalysis depends on residues Asp7, Glu67, and Asp140. Mg(2+) is bound by residues Asp7, Glu67, and Asp140.

It belongs to the RuvC family. Homodimer which binds Holliday junction (HJ) DNA. The HJ becomes 2-fold symmetrical on binding to RuvC with unstacked arms; it has a different conformation from HJ DNA in complex with RuvA. In the full resolvosome a probable DNA-RuvA(4)-RuvB(12)-RuvC(2) complex forms which resolves the HJ. The cofactor is Mg(2+).

The protein localises to the cytoplasm. It catalyses the reaction Endonucleolytic cleavage at a junction such as a reciprocal single-stranded crossover between two homologous DNA duplexes (Holliday junction).. Its function is as follows. The RuvA-RuvB-RuvC complex processes Holliday junction (HJ) DNA during genetic recombination and DNA repair. Endonuclease that resolves HJ intermediates. Cleaves cruciform DNA by making single-stranded nicks across the HJ at symmetrical positions within the homologous arms, yielding a 5'-phosphate and a 3'-hydroxyl group; requires a central core of homology in the junction. The consensus cleavage sequence is 5'-(A/T)TT(C/G)-3'. Cleavage occurs on the 3'-side of the TT dinucleotide at the point of strand exchange. HJ branch migration catalyzed by RuvA-RuvB allows RuvC to scan DNA until it finds its consensus sequence, where it cleaves and resolves the cruciform DNA. The chain is Crossover junction endodeoxyribonuclease RuvC from Rickettsia bellii (strain RML369-C).